A 46-amino-acid polypeptide reads, in one-letter code: Toxin PhcrTx2 (46 aa).

Disulfide bonds link Cys4/Cys40, Cys6/Cys32, and Cys22/Cys41.

It belongs to the sea anemone type 3 (BDS) potassium channel toxin family.

The protein localises to the secreted. The protein resides in the nematocyst. Functionally, neurotoxin that induces paralysis (but not death) to U.thayeri crabs. Partially and reversibly inhibits glutamate-evoked peak currents (IC(50)=4.7 uM) but not voltage-gated potassium channel currents in cultured isolated neurons from the land snail H.aspersa. Weakly inhibits voltage-gated potassium peak currents (IC(50)=6.4 uM) and steady-state currents (IC(50)=8.2 uM) in rat dorsal root ganglion (DRG) neurons. Weakly inhibits voltage-gated sodium currents in rat DRG neurons (IC(50)=0.9 uM). This Phymanthus crucifer (Red beaded anemone) protein is Toxin PhcrTx2.